A 241-amino-acid chain; its full sequence is Small ribosomal subunit protein bS6 (241 aa).

The span at 97–108 shows a compositional bias: basic residues; that stretch reads KPKIRERNRKYT. Disordered regions lie at residues 97 to 187 and 199 to 241; these read KPKI…HREN and NKNH…QSSN. Basic and acidic residues predominate over residues 109–118; that stretch reads PRRDRFDKPN. Composition is skewed to low complexity over residues 130–151, 161–180, and 199–210; these read QDQQ…QTSQ, DDFQ…QQNQ, and NKNHQNQTSQTQ.

This sequence belongs to the bacterial ribosomal protein bS6 family.

Its function is as follows. Binds together with bS18 to 16S ribosomal RNA. This is Small ribosomal subunit protein bS6 from Mesomycoplasma hyopneumoniae (strain 7448) (Mycoplasma hyopneumoniae).